Reading from the N-terminus, the 103-residue chain is Large ribosomal subunit protein bL21 (103 aa).

This sequence belongs to the bacterial ribosomal protein bL21 family. Part of the 50S ribosomal subunit. Contacts protein L20.

This protein binds to 23S rRNA in the presence of protein L20. In Dechloromonas aromatica (strain RCB), this protein is Large ribosomal subunit protein bL21.